Here is a 386-residue protein sequence, read N- to C-terminus: Acetylornithine aminotransferase (386 aa).

Pyridoxal 5'-phosphate is bound by residues 96 to 97 (GA) and Phe-123. Position 126 (Arg-126) interacts with N(2)-acetyl-L-ornithine. 208-211 (DEVQ) is a binding site for pyridoxal 5'-phosphate. N6-(pyridoxal phosphate)lysine is present on Lys-237. Ser-265 contributes to the N(2)-acetyl-L-ornithine binding site. Pyridoxal 5'-phosphate is bound at residue Thr-266.

It belongs to the class-III pyridoxal-phosphate-dependent aminotransferase family. ArgD subfamily. Homodimer. The cofactor is pyridoxal 5'-phosphate.

It is found in the cytoplasm. It catalyses the reaction N(2)-acetyl-L-ornithine + 2-oxoglutarate = N-acetyl-L-glutamate 5-semialdehyde + L-glutamate. It participates in amino-acid biosynthesis; L-arginine biosynthesis; N(2)-acetyl-L-ornithine from L-glutamate: step 4/4. This chain is Acetylornithine aminotransferase, found in Bacillus anthracis.